Here is a 137-residue protein sequence, read N- to C-terminus: 2-iminobutanoate/2-iminopropanoate deaminase (137 aa).

Ser-2 carries the post-translational modification N-acetylserine. 3 positions are modified to N6-succinyllysine: Lys-13, Lys-60, and Lys-67. Thr-74 is subject to Phosphothreonine. A Phosphoserine modification is found at Ser-136.

It belongs to the RutC family. As to quaternary structure, homotrimer. Interacts with YTHDF2. In terms of tissue distribution, expressed predominantly in liver and kidney. Lower levels in lung and brain.

It is found in the cytoplasm. Its subcellular location is the nucleus. It localises to the peroxisome. The protein localises to the mitochondrion. It catalyses the reaction 2-iminobutanoate + H2O = 2-oxobutanoate + NH4(+). It carries out the reaction 2-iminopropanoate + H2O = pyruvate + NH4(+). In terms of biological role, catalyzes the hydrolytic deamination of enamine/imine intermediates that form during the course of normal metabolism. May facilitate the release of ammonia from these potentially toxic reactive metabolites, reducing their impact on cellular components. It may act on enamine/imine intermediates formed by several types of pyridoxal-5'-phosphate-dependent dehydratases including L-threonine dehydratase. Also promotes endoribonucleolytic cleavage of some transcripts by promoting recruitment of the ribonuclease P/MRP complex. Acts by bridging YTHDF2 and the ribonuclease P/MRP complex. RIDA/HRSP12 binds to N6-methyladenosine (m6A)-containing mRNAs containing a 5'-GGUUC-3' motif: cooperative binding of RIDA/HRSP12 and YTHDF2 to such transcripts lead to recruitment of the ribonuclease P/MRP complex and subsequent endoribonucleolytic cleavage. The sequence is that of 2-iminobutanoate/2-iminopropanoate deaminase from Homo sapiens (Human).